The primary structure comprises 140 residues: Small ribosomal subunit protein uS12 (140 aa).

Aspartate 102 bears the 3-methylthioaspartic acid mark.

Belongs to the universal ribosomal protein uS12 family. In terms of assembly, part of the 30S ribosomal subunit. Contacts proteins S8 and S17. May interact with IF1 in the 30S initiation complex.

With S4 and S5 plays an important role in translational accuracy. In terms of biological role, interacts with and stabilizes bases of the 16S rRNA that are involved in tRNA selection in the A site and with the mRNA backbone. Located at the interface of the 30S and 50S subunits, it traverses the body of the 30S subunit contacting proteins on the other side and probably holding the rRNA structure together. The combined cluster of proteins S8, S12 and S17 appears to hold together the shoulder and platform of the 30S subunit. In Bacillus anthracis (strain A0248), this protein is Small ribosomal subunit protein uS12.